The primary structure comprises 208 residues: N-(5'-phosphoribosyl)anthranilate isomerase (208 aa).

The protein belongs to the TrpF family.

The enzyme catalyses N-(5-phospho-beta-D-ribosyl)anthranilate = 1-(2-carboxyphenylamino)-1-deoxy-D-ribulose 5-phosphate. It participates in amino-acid biosynthesis; L-tryptophan biosynthesis; L-tryptophan from chorismate: step 3/5. This Neisseria meningitidis serogroup A / serotype 4A (strain DSM 15465 / Z2491) protein is N-(5'-phosphoribosyl)anthranilate isomerase.